The chain runs to 424 residues: UDP-N-acetylglucosamine 1-carboxyvinyltransferase (424 aa).

22–23 (KN) is a phosphoenolpyruvate binding site. Arg96 is a UDP-N-acetyl-alpha-D-glucosamine binding site. Cys120 serves as the catalytic Proton donor. Cys120 carries the post-translational modification 2-(S-cysteinyl)pyruvic acid O-phosphothioketal. UDP-N-acetyl-alpha-D-glucosamine-binding positions include 125 to 129 (RPVDQ), Asp312, and Ile334.

Belongs to the EPSP synthase family. MurA subfamily.

The protein localises to the cytoplasm. It catalyses the reaction phosphoenolpyruvate + UDP-N-acetyl-alpha-D-glucosamine = UDP-N-acetyl-3-O-(1-carboxyvinyl)-alpha-D-glucosamine + phosphate. Its pathway is cell wall biogenesis; peptidoglycan biosynthesis. In terms of biological role, cell wall formation. Adds enolpyruvyl to UDP-N-acetylglucosamine. The sequence is that of UDP-N-acetylglucosamine 1-carboxyvinyltransferase from Polynucleobacter necessarius subsp. necessarius (strain STIR1).